The following is a 361-amino-acid chain: uncharacterized protein (361 aa).

Disordered regions lie at residues 53 to 75 (KNIS…NINN) and 150 to 211 (NYNN…YHHY). Low complexity predominate over residues 150–198 (NYNNYNNNNNNNNNNNNNNNNNNNNNNNNNNNNNNKNNNKNNNNKPNNF). Residues 199 to 211 (IHHHHHHHHYHHY) are compositionally biased toward basic residues. The helical transmembrane segment at 225–245 (IFIGLMAFLILFILMVIGLLI) threads the bilayer.

It is found in the membrane. This is an uncharacterized protein from Dictyostelium discoideum (Social amoeba).